The following is a 438-amino-acid chain: Exosome complex component RRP45 (438 aa).

Position 65 is a phosphoserine (S65). Residue K297 is modified to N6-acetyllysine; alternate. Residue K297 forms a Glycyl lysine isopeptide (Lys-Gly) (interchain with G-Cter in SUMO1); alternate linkage. Residue K297 forms a Glycyl lysine isopeptide (Lys-Gly) (interchain with G-Cter in SUMO2); alternate linkage. S306 and S346 each carry phosphoserine. Disordered stretches follow at residues 337 to 365 (AQIG…GGID) and 377 to 438 (TGEV…RTAN). The span at 349 to 364 (DLEDSEKEEEEEEGGI) shows a compositional bias: acidic residues. S393 and S395 each carry phosphoserine. Over residues 427–438 (QGKRKKKKRTAN) the composition is skewed to basic residues.

Belongs to the RNase PH family. In terms of assembly, component of the RNA exosome core complex (Exo-9), composed of EXOSC1, EXOSC2, EXOSC3, EXOSC4, EXOSC5, EXOSC6, EXOSC7, EXOSC8 and EXOSC9; within the complex interacts with EXOSC3, EXOSC4, EXOSC5 and DIS3. The catalytically inactive RNA exosome core complex (Exo-9) associates with the catalytic subunit EXOSC10/RRP6. Exo-9 may associate with DIS3 to form the nucleolar exosome complex, or DIS3L to form the cytoplasmic exosome complex. Exo-9 is formed by a hexameric base ring consisting of the heterodimers EXOSC4-EXOSC9, EXOSC5-EXOSC8 and EXOSC6-EXOSC7, and a cap ring consisting of EXOSC1, EXOSC2 and EXOSC3. The RNA exosome complex associates with cofactors C1D/RRP47, MPHOSPH6/MPP6 and MTREX/MTR4. Interacts (via C-terminus region) with SETX (via N-terminus domain); the interaction enhances SETX sumoylation. Interacts with DIS3; the interaction is direct.

It localises to the cytoplasm. It is found in the nucleus. The protein localises to the nucleolus. Its subcellular location is the nucleoplasm. Functionally, non-catalytic component of the RNA exosome complex which has 3'-&gt;5' exoribonuclease activity and participates in a multitude of cellular RNA processing and degradation events. In the nucleus, the RNA exosome complex is involved in proper maturation of stable RNA species such as rRNA, snRNA and snoRNA, in the elimination of RNA processing by-products and non-coding 'pervasive' transcripts, such as antisense RNA species and promoter-upstream transcripts (PROMPTs), and of mRNAs with processing defects, thereby limiting or excluding their export to the cytoplasm. The RNA exosome may be involved in Ig class switch recombination (CSR) and/or Ig variable region somatic hypermutation (SHM) by targeting AICDA deamination activity to transcribed dsDNA substrates. In the cytoplasm, the RNA exosome complex is involved in general mRNA turnover and specifically degrades inherently unstable mRNAs containing AU-rich elements (AREs) within their 3' untranslated regions, and in RNA surveillance pathways, preventing translation of aberrant mRNAs. It seems to be involved in degradation of histone mRNA. The catalytic inactive RNA exosome core complex of 9 subunits (Exo-9) is proposed to play a pivotal role in the binding and presentation of RNA for ribonucleolysis, and to serve as a scaffold for the association with catalytic subunits and accessory proteins or complexes. EXOSC9 binds to ARE-containing RNAs. The sequence is that of Exosome complex component RRP45 (Exosc9) from Mus musculus (Mouse).